The sequence spans 85 residues: Large ribosomal subunit protein bL31 (85 aa).

The tract at residues 65-85 (YGMGGAGKAGEDKKAGDKADA) is disordered. The segment covering 73 to 85 (AGEDKKAGDKADA) has biased composition (basic and acidic residues).

This sequence belongs to the bacterial ribosomal protein bL31 family. Type A subfamily. In terms of assembly, part of the 50S ribosomal subunit.

Functionally, binds the 23S rRNA. The chain is Large ribosomal subunit protein bL31 from Synechococcus sp. (strain WH7803).